Here is a 428-residue protein sequence, read N- to C-terminus: tRNA dimethylallyltransferase (428 aa).

21–28 (GTTGVGKS) serves as a coordination point for ATP. Residue 23-28 (TGVGKS) coordinates dimethylallyl diphosphate. Interaction with substrate tRNA stretches follow at residues 46–49 (DSMQ) and 170–174 (RRVQR). The segment at 199-207 (FDTLFLWLY) is core aggregation region. The interaction with isopentenylpyrophosphate transferase stretch occupies residues 210–232 (PEPLFQRLDDRVDDMLERGALQE). 2 interaction with substrate tRNA regions span residues 256 to 258 (QVI) and 284 to 302 (RMKTRTRQYAKRQVKWIKK). The segment at 373–409 (YTCNVCRNADGKNVVAIGEKYWKIHLGSRRHKSNLKR) adopts a Matrin-type zinc-finger fold. Residues Cys-375, Cys-378, His-397, and His-403 each contribute to the Zn(2+) site.

This sequence belongs to the IPP transferase family.

It localises to the cytoplasm. Its subcellular location is the mitochondrion. The protein localises to the nucleus. The enzyme catalyses adenosine(37) in tRNA + dimethylallyl diphosphate = N(6)-dimethylallyladenosine(37) in tRNA + diphosphate. In terms of biological role, catalyzes the transfer of a dimethylallyl group onto the adenine at position 37 in the anticodon loop on a specific subset of tRNAs both in the cytosol and the mitochondrion, leading to the formation of N6-(dimethylallyl)adenosine (i(6)A). This modification optimizes the codon:anticodon fit in the ribosome and promotes translational fidelity. Competes with the farnesyl pyrophosphate synthase ERG20 for the common substrate dimethylallyl diphosphate (DMAPP). The chain is tRNA dimethylallyltransferase (MOD5) from Saccharomyces cerevisiae (strain ATCC 204508 / S288c) (Baker's yeast).